Here is a 554-residue protein sequence, read N- to C-terminus: Glucose-6-phosphate isomerase (554 aa).

Glu-359 functions as the Proton donor in the catalytic mechanism. Active-site residues include His-390 and Lys-518.

It belongs to the GPI family.

It localises to the cytoplasm. It catalyses the reaction alpha-D-glucose 6-phosphate = beta-D-fructose 6-phosphate. Its pathway is carbohydrate biosynthesis; gluconeogenesis. It participates in carbohydrate degradation; glycolysis; D-glyceraldehyde 3-phosphate and glycerone phosphate from D-glucose: step 2/4. In terms of biological role, catalyzes the reversible isomerization of glucose-6-phosphate to fructose-6-phosphate. The protein is Glucose-6-phosphate isomerase of Pseudomonas syringae pv. tomato (strain ATCC BAA-871 / DC3000).